The primary structure comprises 368 residues: tRNA-specific 2-thiouridylase MnmA (368 aa).

ATP is bound by residues 11–18 (GMSGGVDS) and M37. An interaction with target base in tRNA region spans residues 97–99 (NPD). C102 acts as the Nucleophile in catalysis. C102 and C199 are disulfide-bonded. An ATP-binding site is contributed by G127. Residues 149 to 151 (KDQ) are interaction with tRNA. C199 (cysteine persulfide intermediate) is an active-site residue. The tract at residues 311-312 (RY) is interaction with tRNA.

It belongs to the MnmA/TRMU family. Interacts with TusE.

The protein resides in the cytoplasm. The catalysed reaction is S-sulfanyl-L-cysteinyl-[protein] + uridine(34) in tRNA + AH2 + ATP = 2-thiouridine(34) in tRNA + L-cysteinyl-[protein] + A + AMP + diphosphate + H(+). Functionally, catalyzes the 2-thiolation of uridine at the wobble position (U34) of tRNA(Lys), tRNA(Glu) and tRNA(Gln), leading to the formation of s(2)U34, the first step of tRNA-mnm(5)s(2)U34 synthesis. Sulfur is provided by IscS, via a sulfur-relay system. Binds ATP and its substrate tRNAs. The protein is tRNA-specific 2-thiouridylase MnmA of Escherichia coli O1:K1 / APEC.